The following is a 209-amino-acid chain: MARYTGADCKRCRREKTKLFLKGSKCDTPKCPIEIRPYPPGEHGRGRTKDSEYLLQKREKQKCARIYGILEKQFRGYYDEANRRAGKTGDELLKILESRLDNVVYRGGFAPSRDAARQAVRHGHVQVNGRKVDIPSYRISENDIVEIAPKARELTPFIVARETAGQGRAVPAWLESIPSQMRILVHSLPARQVIDTQVQEQLIVELYSK.

Positions 98–164 constitute an S4 RNA-binding domain; it reads SRLDNVVYRG…TPFIVARETA (67 aa).

It belongs to the universal ribosomal protein uS4 family. As to quaternary structure, part of the 30S ribosomal subunit. Contacts protein S5. The interaction surface between S4 and S5 is involved in control of translational fidelity.

Its function is as follows. One of the primary rRNA binding proteins, it binds directly to 16S rRNA where it nucleates assembly of the body of the 30S subunit. Functionally, with S5 and S12 plays an important role in translational accuracy. The protein is Small ribosomal subunit protein uS4 of Frankia alni (strain DSM 45986 / CECT 9034 / ACN14a).